We begin with the raw amino-acid sequence, 327 residues long: Interleukin-12 subunit beta (327 aa).

A signal peptide spans 1 to 22 (MHPQQLVVSWFSLVLLASPIVA). An Ig-like C2-type domain is found at 23-106 (IWELEKNVYI…LSRSLLLLHK (84 aa)). Cysteine 50 and cysteine 90 form a disulfide bridge. Asparagine 223 carries N-linked (GlcNAc...) asparagine glycosylation. One can recognise a Fibronectin type-III domain in the interval 238–327 (PPKNLQLKPL…WSEWASVSCS (90 aa)).

It belongs to the IL-12B family. As to quaternary structure, heterodimer with IL12A; disulfide-linked. The heterodimer is known as interleukin IL-12. Heterodimer with IL23A; disulfide-linked. The heterodimer is known as interleukin IL-23. Also secreted as a monomer. Interacts with NBR1; this interaction promotes IL-12 secretion.

In terms of biological role, cytokine that can act as a growth factor for activated T and NK cells, enhance the lytic activity of NK/lymphokine-activated killer cells, and stimulate the production of IFN-gamma by resting PBMC. Functionally, associates with IL23A to form the IL-23 interleukin, a heterodimeric cytokine which functions in innate and adaptive immunity. IL-23 may constitute with IL-17 an acute response to infection in peripheral tissues. IL-23 binds to a heterodimeric receptor complex composed of IL12RB1 and IL23R, activates the Jak-Stat signaling cascade, stimulates memory rather than naive T-cells and promotes production of pro-inflammatory cytokines. IL-23 induces autoimmune inflammation and thus may be responsible for autoimmune inflammatory diseases and may be important for tumorigenesis. In Bubalus bubalis (Domestic water buffalo), this protein is Interleukin-12 subunit beta (IL12B).